We begin with the raw amino-acid sequence, 240 residues long: Ribosomal RNA large subunit methyltransferase E (240 aa).

Residues 1–13 (MAKKPGSQNTSGR) are compositionally biased toward polar residues. Residues 1–20 (MAKKPGSQNTSGRGQRDLKV) form a disordered region. S-adenosyl-L-methionine-binding residues include Gly-85, Trp-87, Asp-113, Asp-129, and Asp-153. Lys-193 serves as the catalytic Proton acceptor.

The protein belongs to the class I-like SAM-binding methyltransferase superfamily. RNA methyltransferase RlmE family.

It localises to the cytoplasm. The catalysed reaction is uridine(2552) in 23S rRNA + S-adenosyl-L-methionine = 2'-O-methyluridine(2552) in 23S rRNA + S-adenosyl-L-homocysteine + H(+). Functionally, specifically methylates the uridine in position 2552 of 23S rRNA at the 2'-O position of the ribose in the fully assembled 50S ribosomal subunit. In Roseobacter denitrificans (strain ATCC 33942 / OCh 114) (Erythrobacter sp. (strain OCh 114)), this protein is Ribosomal RNA large subunit methyltransferase E.